The following is a 494-amino-acid chain: Psoralen synthase (494 aa).

The chain crosses the membrane as a helical span at residues 12–29 (YFFSLFLVTIFLYKWLTL). Cysteine 436 provides a ligand contact to heme.

It belongs to the cytochrome P450 family.

Its subcellular location is the endoplasmic reticulum membrane. It localises to the microsome membrane. The catalysed reaction is (7S)-marmesin + reduced [NADPH--hemoprotein reductase] + O2 = psoralen + acetone + oxidized [NADPH--hemoprotein reductase] + 2 H2O + H(+). With respect to regulation, inhibited by columbianetin. Its function is as follows. Involved in linear furanocumarin (psoralen) biosynthesis. Converts marmesin to psoralen. This Ammi majus (Bishop's weed) protein is Psoralen synthase (CYP71AJ1).